The following is a 777-amino-acid chain: Ribosome biogenesis protein ERB1 (777 aa).

A disordered region spans residues 1 to 122 (MAPTAPAKKR…RPNYRVVEDA (122 aa)). The span at 36–67 (SEDDSDFVASGDEDEEDEDEDEDEDKDEDDEH) shows a compositional bias: acidic residues. WD repeat units lie at residues 430 to 469 (GHEG…QVWA), 473 to 513 (SSDE…PEVE), 562 to 604 (TVRS…SQIP), 606 to 645 (RKLS…LVKV), 648 to 687 (PGAR…RPYK), 691 to 731 (FHPQ…DLME), and 747 to 777 (VDSL…RLWM).

This sequence belongs to the WD repeat BOP1/ERB1 family. Component of the NOP7 complex, composed of ERB1, NOP7 and YTM1. The complex is held together by ERB1, which interacts with NOP7 via its N-terminal domain and with YTM1 via a high-affinity interaction between the seven-bladed beta-propeller domains of the 2 proteins. The NOP7 complex associates with the 66S pre-ribosome.

It localises to the nucleus. Its subcellular location is the nucleolus. The protein resides in the nucleoplasm. Functionally, component of the NOP7 complex, which is required for maturation of the 25S and 5.8S ribosomal RNAs and formation of the 60S ribosome. This Pyricularia oryzae (strain 70-15 / ATCC MYA-4617 / FGSC 8958) (Rice blast fungus) protein is Ribosome biogenesis protein ERB1.